Consider the following 198-residue polypeptide: Pyridoxine/pyridoxamine 5'-phosphate oxidase (198 aa).

FMN-binding positions include 47-52, 62-63, arginine 68, lysine 69, and glutamine 91; these read RMVLVK and FT. Lysine 52 lines the substrate pocket. Residues tyrosine 109, arginine 113, and serine 117 each coordinate substrate. FMN is bound by residues 126 to 127 and tryptophan 171; that span reads QS. A substrate-binding site is contributed by 177 to 179; it reads RLH. Arginine 181 lines the FMN pocket.

Belongs to the pyridoxamine 5'-phosphate oxidase family. As to quaternary structure, homodimer. FMN serves as cofactor.

It carries out the reaction pyridoxamine 5'-phosphate + O2 + H2O = pyridoxal 5'-phosphate + H2O2 + NH4(+). The enzyme catalyses pyridoxine 5'-phosphate + O2 = pyridoxal 5'-phosphate + H2O2. It participates in cofactor metabolism; pyridoxal 5'-phosphate salvage; pyridoxal 5'-phosphate from pyridoxamine 5'-phosphate: step 1/1. It functions in the pathway cofactor metabolism; pyridoxal 5'-phosphate salvage; pyridoxal 5'-phosphate from pyridoxine 5'-phosphate: step 1/1. Its function is as follows. Catalyzes the oxidation of either pyridoxine 5'-phosphate (PNP) or pyridoxamine 5'-phosphate (PMP) into pyridoxal 5'-phosphate (PLP). The chain is Pyridoxine/pyridoxamine 5'-phosphate oxidase from Anaeromyxobacter dehalogenans (strain 2CP-C).